We begin with the raw amino-acid sequence, 138 residues long: Phosphoribosyl-AMP cyclohydrolase (138 aa).

Aspartate 84 is a binding site for Mg(2+). Cysteine 85 lines the Zn(2+) pocket. Mg(2+) contacts are provided by aspartate 86 and aspartate 88. Zn(2+) contacts are provided by cysteine 102 and cysteine 109.

It belongs to the PRA-CH family. Homodimer. Mg(2+) serves as cofactor. It depends on Zn(2+) as a cofactor.

It localises to the cytoplasm. It carries out the reaction 1-(5-phospho-beta-D-ribosyl)-5'-AMP + H2O = 1-(5-phospho-beta-D-ribosyl)-5-[(5-phospho-beta-D-ribosylamino)methylideneamino]imidazole-4-carboxamide. It participates in amino-acid biosynthesis; L-histidine biosynthesis; L-histidine from 5-phospho-alpha-D-ribose 1-diphosphate: step 3/9. Functionally, catalyzes the hydrolysis of the adenine ring of phosphoribosyl-AMP. This is Phosphoribosyl-AMP cyclohydrolase from Burkholderia cenocepacia (strain ATCC BAA-245 / DSM 16553 / LMG 16656 / NCTC 13227 / J2315 / CF5610) (Burkholderia cepacia (strain J2315)).